The primary structure comprises 136 residues: Fatty acid-binding protein homolog 5 (136 aa).

Residues arginine 111 and 131–133 (RAY) each bind a fatty acid.

Belongs to the calycin superfamily. Fatty-acid binding protein (FABP) family.

This is Fatty acid-binding protein homolog 5 (lbp-5) from Caenorhabditis elegans.